The following is a 44-amino-acid chain: Tachystatin-A1 (44 aa).

3 disulfides stabilise this stretch: Cys4-Cys24, Cys11-Cys29, and Cys23-Cys41.

As to expression, granular hemocytes, small secretory granules.

Its subcellular location is the secreted. Exhibits stronger antimicrobial activity against the Gram-positive bacteria (S.aureus (IC(50) is 4.2 ug/ml)) and fungi (C.albicans (IC(50) is 3.0 ug/ml) and P.pastoris (IC(50) is 0.5 ug/ml)) than Gram-negative bacteria (E.coli (IC(50) is 25 ug/ml)). Binds to chitin (8.4 uM are required to obtain 50% of binding). Does not cause hemolysis on sheep erythrocytes. Has no blocking activity on the P-type calcium channel. In Tachypleus tridentatus (Japanese horseshoe crab), this protein is Tachystatin-A1.